We begin with the raw amino-acid sequence, 393 residues long: tRNA-specific 2-thiouridylase MnmA (393 aa).

ATP contacts are provided by residues 19–26 and L45; that span reads AMSGGVDS. The Nucleophile role is filled by C113. The cysteines at positions 113 and 210 are disulfide-linked. An ATP-binding site is contributed by G137. The segment at 160 to 162 is interaction with tRNA; that stretch reads RDQ. The active-site Cysteine persulfide intermediate is C210.

It belongs to the MnmA/TRMU family.

It localises to the cytoplasm. It catalyses the reaction S-sulfanyl-L-cysteinyl-[protein] + uridine(34) in tRNA + AH2 + ATP = 2-thiouridine(34) in tRNA + L-cysteinyl-[protein] + A + AMP + diphosphate + H(+). Catalyzes the 2-thiolation of uridine at the wobble position (U34) of tRNA, leading to the formation of s(2)U34. The sequence is that of tRNA-specific 2-thiouridylase MnmA from Bradyrhizobium diazoefficiens (strain JCM 10833 / BCRC 13528 / IAM 13628 / NBRC 14792 / USDA 110).